A 318-amino-acid chain; its full sequence is MSEILFFSPQPLFSHMMNKNSRLHTHSNIKNTFFSEIGIGILGNSFLLLFHILKFIRGHRLRLTDLPIGLLSLIHLLMLLLMAFIATDIFISRRGWDDIICKFLVYLYRVLRGLSLCTTSMLSVLQAIILSPRSSCLAKLKHKYPHHISCAIIFLSVLYMLISSHILLSIIATPNLTRNDFLYVTQSCSILPLSYVMQSMYSTLLALREVFLISLMVLSTLYMVVLLCRHRKQAQHLQGTSLSPKASAEQRATQTILMLMTFFVLMSIFDSIVSCSRTMFLDDPTSYSIHIFVMHIYATVSPFVFMSTEKHIVNILRG.

Residues 1 to 32 lie on the Extracellular side of the membrane; sequence MSEILFFSPQPLFSHMMNKNSRLHTHSNIKNT. The helical transmembrane segment at 33-53 threads the bilayer; the sequence is FFSEIGIGILGNSFLLLFHIL. The Cytoplasmic segment spans residues 54–65; sequence KFIRGHRLRLTD. The helical transmembrane segment at 66 to 86 threads the bilayer; the sequence is LPIGLLSLIHLLMLLLMAFIA. The Extracellular segment spans residues 87-109; it reads TDIFISRRGWDDIICKFLVYLYR. A disulfide bridge links Cys101 with Cys188. Residues 110 to 130 form a helical membrane-spanning segment; that stretch reads VLRGLSLCTTSMLSVLQAIIL. The Cytoplasmic portion of the chain corresponds to 131-150; sequence SPRSSCLAKLKHKYPHHISC. A helical membrane pass occupies residues 151 to 171; sequence AIIFLSVLYMLISSHILLSII. At 172 to 206 the chain is on the extracellular side; sequence ATPNLTRNDFLYVTQSCSILPLSYVMQSMYSTLLA. Asn175 is a glycosylation site (N-linked (GlcNAc...) asparagine). A helical membrane pass occupies residues 207–227; that stretch reads LREVFLISLMVLSTLYMVVLL. The Cytoplasmic portion of the chain corresponds to 228–254; sequence CRHRKQAQHLQGTSLSPKASAEQRATQ. The helical transmembrane segment at 255-275 threads the bilayer; the sequence is TILMLMTFFVLMSIFDSIVSC. Over 276-285 the chain is Extracellular; that stretch reads SRTMFLDDPT. A helical transmembrane segment spans residues 286–306; it reads SYSIHIFVMHIYATVSPFVFM. The Cytoplasmic segment spans residues 307–318; sequence STEKHIVNILRG.

The protein belongs to the G-protein coupled receptor 1 family. As to expression, expressed in a subset of sensory neurons located in the apical layer of the vomeronasal organ.

The protein localises to the cell membrane. Functionally, putative pheromone receptor implicated in the regulation of social and reproductive behavior. This is Vomeronasal type-1 receptor 45 (Vmn1r45) from Mus musculus (Mouse).